We begin with the raw amino-acid sequence, 107 residues long: Flagellar hook-basal body complex protein FliE (107 aa).

It belongs to the FliE family.

The protein resides in the bacterial flagellum basal body. The chain is Flagellar hook-basal body complex protein FliE from Mesorhizobium japonicum (strain LMG 29417 / CECT 9101 / MAFF 303099) (Mesorhizobium loti (strain MAFF 303099)).